We begin with the raw amino-acid sequence, 255 residues long: tRNA (guanine-N(1)-)-methyltransferase (255 aa).

S-adenosyl-L-methionine contacts are provided by residues glycine 113 and 133-138 (IGDYVL).

Belongs to the RNA methyltransferase TrmD family. In terms of assembly, homodimer.

The protein resides in the cytoplasm. It carries out the reaction guanosine(37) in tRNA + S-adenosyl-L-methionine = N(1)-methylguanosine(37) in tRNA + S-adenosyl-L-homocysteine + H(+). Specifically methylates guanosine-37 in various tRNAs. This is tRNA (guanine-N(1)-)-methyltransferase from Escherichia coli O6:K15:H31 (strain 536 / UPEC).